An 838-amino-acid polypeptide reads, in one-letter code: MHLEGRDGRRYPGAPAVELLQTSVPSGLAELVAGKRRLPRGAGGADPSHSCPRGAAGQSSWAPAGQEFASFLTKGRSHSSLPQMSSSRSKDSCFTENTPLLRNSLQEKGSRCIPVYHPEFITAEESWEDSSADWERRYLLSREVSGLSASASSEKGDLLDSPHIRLRLSKLRRCVQWLKVMGLFAFVVLCSILFSLYPDQGKLWQLLALSPLENYSVNLSSHVDSTLLQVDLAGALVASGPSRPGREEHIVVELTQADALGSRWRRPQQVTHNWTVYLNPRRSEHSVMSRTFEVLTRETVSISIRASLQQTQAVPLLMAHQYLRGSVETQVTIATAILAGVYALIIFEIVHRTLAAMLGSLAALAALAVIGDRPSLTHVVEWIDFETLALLFGMMILVAIFSETGFFDYCAVKAYRLSRGRVWAMIIMLCLIAAVLSAFLDNVTTMLLFTPVTIRLCEVLNLDPRQVLIAEVIFTNIGGAATAIGDPPNVIIVSNQELRKMGLDFAGFTAHMFIGICLVLLVCFPLLRLLYWNRKLYNKEPSEIVELKHEIHVWRLTAQRISPASREETAVRRLLLGKVLALEHLLARRLHTFHRQISQEDKNWETNIQELQKKHRISDGILLAKCLTVLGFVIFMFFLNSFVPGIHLDLGWIAILGAIWLLILADIHDFEIILHRVEWATLLFFAALFVLMEALAHLHLIEYVGEQTALLIKMVPEEQRLIAAIVLVVWVSALASSLIDNIPFTATMIPVLLNLSHDPEVGLPAPPLMYALAFGACLGGNGTLIGASANVVCAGIAEQHGYGFSFMEFFRLGFPMMVVSCTVGMCYLLVAHVVVGWN.

Over 1-179 (MHLEGRDGRR…KLRRCVQWLK (179 aa)) the chain is Cytoplasmic. Disordered stretches follow at residues 38-60 (LPRGAGGADPSHSCPRGAAGQSS) and 74-94 (KGRSHSSLPQMSSSRSKDSCF). A compositionally biased stretch (polar residues) spans 78-87 (HSSLPQMSSS). A helical transmembrane segment spans residues 180–197 (VMGLFAFVVLCSILFSLY). Residues 198–330 (PDQGKLWQLL…QYLRGSVETQ (133 aa)) are Extracellular-facing. N-linked (GlcNAc...) asparagine glycans are attached at residues Asn214, Asn218, and Asn273. Residues 331–347 (VTIATAILAGVYALIIF) traverse the membrane as a helical segment. Residues 348–353 (EIVHRT) lie on the Cytoplasmic side of the membrane. Residues 354–370 (LAAMLGSLAALAALAVI) traverse the membrane as a helical segment. Topologically, residues 371–384 (GDRPSLTHVVEWID) are extracellular. Residues 385 to 401 (FETLALLFGMMILVAIF) traverse the membrane as a helical segment. Residues 402 to 423 (SETGFFDYCAVKAYRLSRGRVW) are Cytoplasmic-facing. A helical membrane pass occupies residues 424-440 (AMIIMLCLIAAVLSAFL). Over 441–513 (DNVTTMLLFT…DFAGFTAHMF (73 aa)) the chain is Extracellular. A glycan (N-linked (GlcNAc...) asparagine) is linked at Asn442. Residues 514–530 (IGICLVLLVCFPLLRLL) traverse the membrane as a helical segment. Over 531–620 (YWNRKLYNKE…LQKKHRISDG (90 aa)) the chain is Cytoplasmic. A helical transmembrane segment spans residues 621-637 (ILLAKCLTVLGFVIFMF). Residues 638-647 (FLNSFVPGIH) lie on the Extracellular side of the membrane. A helical transmembrane segment spans residues 648–664 (LDLGWIAILGAIWLLIL). The Cytoplasmic portion of the chain corresponds to 665–679 (ADIHDFEIILHRVEW). The chain crosses the membrane as a helical span at residues 680 to 696 (ATLLFFAALFVLMEALA). Topologically, residues 697-720 (HLHLIEYVGEQTALLIKMVPEEQR) are extracellular. Residues 721–737 (LIAAIVLVVWVSALASS) form a helical membrane-spanning segment. The Cytoplasmic portion of the chain corresponds to 738–760 (LIDNIPFTATMIPVLLNLSHDPE). Residues 761–777 (VGLPAPPLMYALAFGAC) form a helical membrane-spanning segment. Over 778–817 (LGGNGTLIGASANVVCAGIAEQHGYGFSFMEFFRLGFPMM) the chain is Extracellular. Residue Asn781 is glycosylated (N-linked (GlcNAc...) asparagine). A helical transmembrane segment spans residues 818 to 834 (VVSCTVGMCYLLVAHVV). Over 835-838 (VGWN) the chain is Cytoplasmic.

It belongs to the CitM (TC 2.A.11) transporter family. As to expression, expressed in melanocytes and retinal pigment epithelium.

It localises to the melanosome membrane. It catalyses the reaction chloride(in) = chloride(out). In terms of biological role, contributes to a melanosome-specific anion (chloride) current that modulates melanosomal pH for optimal tyrosinase activity required for melanogenesis and the melanosome maturation. One of the components of the mammalian pigmentary system. May serve as a key control point at which ethnic skin color variation is determined. Major determinant of brown and/or blue eye color. Seems to regulate the post-translational processing of tyrosinase, which catalyzes the limiting reaction in melanin synthesis. In Homo sapiens (Human), this protein is P protein.